We begin with the raw amino-acid sequence, 556 residues long: 2-succinyl-5-enolpyruvyl-6-hydroxy-3-cyclohexene-1-carboxylate synthase (556 aa).

The protein belongs to the TPP enzyme family. MenD subfamily. Homodimer. The cofactor is Mg(2+). Requires Mn(2+) as cofactor. Thiamine diphosphate serves as cofactor.

It catalyses the reaction isochorismate + 2-oxoglutarate + H(+) = 5-enolpyruvoyl-6-hydroxy-2-succinyl-cyclohex-3-ene-1-carboxylate + CO2. It functions in the pathway quinol/quinone metabolism; 1,4-dihydroxy-2-naphthoate biosynthesis; 1,4-dihydroxy-2-naphthoate from chorismate: step 2/7. It participates in quinol/quinone metabolism; menaquinone biosynthesis. Its function is as follows. Catalyzes the thiamine diphosphate-dependent decarboxylation of 2-oxoglutarate and the subsequent addition of the resulting succinic semialdehyde-thiamine pyrophosphate anion to isochorismate to yield 2-succinyl-5-enolpyruvyl-6-hydroxy-3-cyclohexene-1-carboxylate (SEPHCHC). In Salmonella paratyphi C (strain RKS4594), this protein is 2-succinyl-5-enolpyruvyl-6-hydroxy-3-cyclohexene-1-carboxylate synthase.